The primary structure comprises 120 residues: Large ribosomal subunit protein uL18 (120 aa).

Belongs to the universal ribosomal protein uL18 family. As to quaternary structure, part of the 50S ribosomal subunit; part of the 5S rRNA/L5/L18/L25 subcomplex. Contacts the 5S and 23S rRNAs.

This is one of the proteins that bind and probably mediate the attachment of the 5S RNA into the large ribosomal subunit, where it forms part of the central protuberance. The sequence is that of Large ribosomal subunit protein uL18 from Brevibacillus brevis (strain 47 / JCM 6285 / NBRC 100599).